The following is a 138-amino-acid chain: ATP synthase epsilon chain 1 (138 aa).

This sequence belongs to the ATPase epsilon chain family. F-type ATPases have 2 components, CF(1) - the catalytic core - and CF(0) - the membrane proton channel. CF(1) has five subunits: alpha(3), beta(3), gamma(1), delta(1), epsilon(1). CF(0) has three main subunits: a, b and c.

Its subcellular location is the cell inner membrane. Produces ATP from ADP in the presence of a proton gradient across the membrane. This chain is ATP synthase epsilon chain 1, found in Syntrophotalea carbinolica (strain DSM 2380 / NBRC 103641 / GraBd1) (Pelobacter carbinolicus).